Here is a 1048-residue protein sequence, read N- to C-terminus: NACHT, LRR and PYD domains-containing protein 8 (1048 aa).

The disordered stretch occupies residues 1-23 (MSDVNPPSDTPIPFSSSSTHSSH). Residues 11–23 (PIPFSSSSTHSSH) show a composition bias toward low complexity. A Pyrin domain is found at 33–131 (PGSPCENGVM…NAILPTLEPE (99 aa)). Positions 204 to 527 (KTVAIQGAPG…FYVLCFPQRL (324 aa)) constitute an NACHT domain. 210–217 (GAPGIGKT) provides a ligand contact to ATP. 5 LRR repeats span residues 815 to 838 (NGHL…YLSV), 839 to 861 (AQLE…SLAS), 866 to 890 (SKML…IWNA), 923 to 950 (NKTL…ALKN), and 980 to 1007 (NQHL…AFSS). Residues 1029–1048 (PTPHPPDFTGKSDCLSQINP) form a disordered region.

It belongs to the NLRP family.

It is found in the cytoplasm. Its function is as follows. Involved in inflammation. The chain is NACHT, LRR and PYD domains-containing protein 8 (NLRP8) from Homo sapiens (Human).